The primary structure comprises 608 residues: uncharacterized protein (608 aa).

The signal sequence occupies residues 1–38; that stretch reads MWLQQRLKVFPGLLSSSWARRVLAVSGFLVIIYWYIFS. The Extracellular portion of the chain corresponds to 39 to 563; that stretch reads GSLFRSFWYA…EEHMAKQYRG (525 aa). N-linked (GlcNAc...) asparagine glycosylation occurs at Asn-337. The helical transmembrane segment at 564–584 threads the bilayer; sequence LPFLFWFSVASLITLFHLFLF. The Cytoplasmic portion of the chain corresponds to 585–608; the sequence is KLIYNEYCGPGAKPLFRSKEDTSV.

The protein localises to the membrane. This is an uncharacterized protein from Xenopus tropicalis (Western clawed frog).